The chain runs to 605 residues: Exonuclease V, mitochondrial (605 aa).

The transit peptide at 1–17 (MSLNFLKRYLSRSTRNF) directs the protein to the mitochondrion. [4Fe-4S] cluster contacts are provided by Cys-140, Cys-563, Cys-566, and Cys-572.

The protein belongs to the EXO5 family. In terms of assembly, monomer. Mg(2+) is required as a cofactor. The cofactor is [4Fe-4S] cluster.

Its subcellular location is the mitochondrion. In terms of biological role, single strand DNA specific 5' exonuclease involved in mitochondrial DNA replication and recombination. Releases dinucleotides as main products of catalysis. Has the capacity to slide across 5'double-stranded DNA or 5'RNA sequences and resumes cutting two nucleotides downstream of the double-stranded-to-single-stranded junction or RNA-to-DNA junction, respectively. In Candida tropicalis (strain ATCC MYA-3404 / T1) (Yeast), this protein is Exonuclease V, mitochondrial (EXO5).